We begin with the raw amino-acid sequence, 177 residues long: Nucleoside triphosphate/diphosphate phosphatase (177 aa).

The active-site Proton donor is the Arg-23. Mg(2+)-binding residues include Asn-87, Asp-103, Asp-105, Asp-107, Asp-120, and Glu-123.

The protein belongs to the Ntdp family. Requires Mg(2+) as cofactor.

It carries out the reaction a ribonucleoside 5'-triphosphate + H2O = a ribonucleoside 5'-diphosphate + phosphate + H(+). The enzyme catalyses a ribonucleoside 5'-diphosphate + H2O = a ribonucleoside 5'-phosphate + phosphate + H(+). Has nucleoside phosphatase activity towards nucleoside triphosphates and nucleoside diphosphates. The polypeptide is Nucleoside triphosphate/diphosphate phosphatase (Streptococcus agalactiae serotype Ia (strain ATCC 27591 / A909 / CDC SS700)).